Reading from the N-terminus, the 251-residue chain is Large ribosomal subunit protein uL3 (251 aa).

The residue at position 151 (Gln-151) is an N5-methylglutamine. The tract at residues 219–251 is disordered; that stretch reads PGAFRRNGEEAAAAPAAEAPAETPAEEAGQEGA. Low complexity predominate over residues 228–241; that stretch reads EAAAAPAAEAPAET. A compositionally biased stretch (acidic residues) spans 242-251; that stretch reads PAEEAGQEGA.

It belongs to the universal ribosomal protein uL3 family. As to quaternary structure, part of the 50S ribosomal subunit. Forms a cluster with proteins L14 and L19. In terms of processing, methylated by PrmB.

In terms of biological role, one of the primary rRNA binding proteins, it binds directly near the 3'-end of the 23S rRNA, where it nucleates assembly of the 50S subunit. The protein is Large ribosomal subunit protein uL3 of Parvibaculum lavamentivorans (strain DS-1 / DSM 13023 / NCIMB 13966).